The sequence spans 686 residues: Methionine--tRNA ligase (686 aa).

The 'HIGH' region signature appears at 15 to 25; the sequence is PYANGPIHLGH. Residues cysteine 146, cysteine 149, cysteine 159, and cysteine 162 each coordinate Zn(2+). The 'KMSKS' region motif lies at 331–335; that stretch reads KMSKS. ATP is bound at residue lysine 334. The tRNA-binding domain maps to 584 to 686; it reads DFAKIDLRVA…AGVKAGSRVM (103 aa).

The protein belongs to the class-I aminoacyl-tRNA synthetase family. MetG type 1 subfamily. As to quaternary structure, homodimer. Zn(2+) is required as a cofactor.

Its subcellular location is the cytoplasm. It catalyses the reaction tRNA(Met) + L-methionine + ATP = L-methionyl-tRNA(Met) + AMP + diphosphate. In terms of biological role, is required not only for elongation of protein synthesis but also for the initiation of all mRNA translation through initiator tRNA(fMet) aminoacylation. The polypeptide is Methionine--tRNA ligase (Mannheimia succiniciproducens (strain KCTC 0769BP / MBEL55E)).